A 449-amino-acid polypeptide reads, in one-letter code: Tubulin alpha chain (449 aa).

GTP is bound by residues glutamine 11, glutamate 71, serine 140, glycine 144, threonine 145, threonine 179, asparagine 206, and asparagine 228. Glutamate 71 lines the Mg(2+) pocket. Glutamate 254 is a catalytic residue.

It belongs to the tubulin family. In terms of assembly, dimer of alpha and beta chains. A typical microtubule is a hollow water-filled tube with an outer diameter of 25 nm and an inner diameter of 15 nM. Alpha-beta heterodimers associate head-to-tail to form protofilaments running lengthwise along the microtubule wall with the beta-tubulin subunit facing the microtubule plus end conferring a structural polarity. Microtubules usually have 13 protofilaments but different protofilament numbers can be found in some organisms and specialized cells. Requires Mg(2+) as cofactor.

Its subcellular location is the cytoplasm. It is found in the cytoskeleton. It carries out the reaction GTP + H2O = GDP + phosphate + H(+). In terms of biological role, tubulin is the major constituent of microtubules, a cylinder consisting of laterally associated linear protofilaments composed of alpha- and beta-tubulin heterodimers. Microtubules grow by the addition of GTP-tubulin dimers to the microtubule end, where a stabilizing cap forms. Below the cap, tubulin dimers are in GDP-bound state, owing to GTPase activity of alpha-tubulin. The chain is Tubulin alpha chain (TUB1) from Gibberella zeae (strain ATCC MYA-4620 / CBS 123657 / FGSC 9075 / NRRL 31084 / PH-1) (Wheat head blight fungus).